The chain runs to 447 residues: Glutamate-1-semialdehyde 2,1-aminomutase (447 aa).

Position 277 is an N6-(pyridoxal phosphate)lysine (Lys-277).

This sequence belongs to the class-III pyridoxal-phosphate-dependent aminotransferase family. HemL subfamily. As to quaternary structure, homodimer. The cofactor is pyridoxal 5'-phosphate.

Its subcellular location is the cytoplasm. It carries out the reaction (S)-4-amino-5-oxopentanoate = 5-aminolevulinate. The protein operates within porphyrin-containing compound metabolism; protoporphyrin-IX biosynthesis; 5-aminolevulinate from L-glutamyl-tRNA(Glu): step 2/2. In Arthrobacter sp. (strain FB24), this protein is Glutamate-1-semialdehyde 2,1-aminomutase.